A 160-amino-acid polypeptide reads, in one-letter code: Probable chemoreceptor glutamine deamidase CheD 2 (160 aa).

This sequence belongs to the CheD family.

It carries out the reaction L-glutaminyl-[protein] + H2O = L-glutamyl-[protein] + NH4(+). Its function is as follows. Probably deamidates glutamine residues to glutamate on methyl-accepting chemotaxis receptors (MCPs), playing an important role in chemotaxis. This is Probable chemoreceptor glutamine deamidase CheD 2 from Geobacter sulfurreducens (strain ATCC 51573 / DSM 12127 / PCA).